A 394-amino-acid chain; its full sequence is NAC domain-containing protein 26 (394 aa).

Residues 7–156 (VPPGFRFHPT…GWVVCRVFKK (150 aa)) form the NAC domain. A DNA-binding region spans residues 107-162 (IGMRKTLVFYKGRAPNGQKSDWIMHEYRLETSENGTPQEEGWVVCRVFKKKLAATV).

This sequence belongs to the plant vascular related NAC-domain protein family. As to quaternary structure, interacts with NAC083/VNI2. In terms of tissue distribution, detected in root vessels of protoxylems, outermost metaxylems, inner metaxylems, shoots and hypocotyls. Expressed in roots, hypocotyls, cotyledons and leaves. Expressed in developing xylems. Specifically expressed in vessels in the secondary xylem of the root-hypocotyl region, and in vessels but not in interfascicular fibers in stems.

It is found in the nucleus. Transcription activator that binds to the secondary wall NAC binding element (SNBE), 5'-(T/A)NN(C/T)(T/C/G)TNNNNNNNA(A/C)GN(A/C/T)(A/T)-3', in the promoter of target genes. Involved in xylem formation by promoting the expression of secondary wall-associated transcription factors and of genes involved in secondary wall biosynthesis and programmed cell death, genes driven by the secondary wall NAC binding element (SNBE). Triggers thickening of secondary walls. The protein is NAC domain-containing protein 26 of Arabidopsis thaliana (Mouse-ear cress).